Consider the following 459-residue polypeptide: Cytosolic carboxypeptidase 6 (459 aa).

A Peptidase M14 domain is found at 142-418; sequence IPYTYGQMQI…AFCRALLNFY (277 aa). Positions 204, 207, and 302 each coordinate Zn(2+). Catalysis depends on glutamate 376, which acts as the Proton donor/acceptor.

The protein belongs to the peptidase M14 family. It depends on Zn(2+) as a cofactor. Expressed in labial and amphid neurons.

The protein localises to the cytoplasm. The enzyme catalyses (L-glutamyl)(n+1)-gamma-L-glutamyl-L-glutamyl-[protein] + H2O = (L-glutamyl)(n)-gamma-L-glutamyl-L-glutamyl-[protein] + L-glutamate. Functionally, metallocarboxypeptidase that catalyzes the removing of polyglutamate side chains that are present on the gamma-carboxyl group of glutamate residues of tubulin in sensory cilia. Probably via the deglutamylation of tubulin, promotes microtubule stability required for axon regrowth after injury. Also regulates microtubule dynamics in uterine muscle cells. This Caenorhabditis elegans protein is Cytosolic carboxypeptidase 6.